Here is a 181-residue protein sequence, read N- to C-terminus: Adenine phosphoribosyltransferase (181 aa).

This sequence belongs to the purine/pyrimidine phosphoribosyltransferase family. In terms of assembly, homodimer.

The protein resides in the cytoplasm. The catalysed reaction is AMP + diphosphate = 5-phospho-alpha-D-ribose 1-diphosphate + adenine. It participates in purine metabolism; AMP biosynthesis via salvage pathway; AMP from adenine: step 1/1. In terms of biological role, catalyzes a salvage reaction resulting in the formation of AMP, that is energically less costly than de novo synthesis. The chain is Adenine phosphoribosyltransferase from Vibrio parahaemolyticus serotype O3:K6 (strain RIMD 2210633).